We begin with the raw amino-acid sequence, 153 residues long: MAMVRADADRESLGEGLLQERSQWLWSLPTAQPGAEDADDQLVLGEEELQDLEEEAVARHSFSQRIHSRATPLEVSPSGRLYQSIRHSRMEYSRPTMNIRSQIVSYSSSARPLPQQPAPSLTSWTPIAKHLHSHQQSISSQSPKLVRGASQRR.

Positions 107–153 (SSSARPLPQQPAPSLTSWTPIAKHLHSHQQSISSQSPKLVRGASQRR) are disordered.

Belongs to the luteoviruses movement protein family.

Its function is as follows. Transports viral genome to neighboring plant cells directly through plasmosdesmata, without any budding. The movement protein allows efficient cell to cell propagation, by bypassing the host cell wall barrier. The sequence is that of Movement protein from Avena byzantina (Oat).